Reading from the N-terminus, the 47-residue chain is Trifunctional NAD biosynthesis/regulator protein NadR (47 aa).

The HTH cro/C1-type domain occupies Leu-7–Ser-47. The segment at residues Leu-18–Asn-37 is a DNA-binding region (H-T-H motif).

The protein resides in the cell membrane. It is found in the cytoplasm. The enzyme catalyses beta-nicotinamide D-ribonucleotide + ATP + H(+) = diphosphate + NAD(+). It carries out the reaction beta-nicotinamide D-riboside + ATP = beta-nicotinamide D-ribonucleotide + ADP + H(+). Its pathway is cofactor biosynthesis; NAD(+) biosynthesis [regulation]. The protein operates within cofactor biosynthesis; NAD(+) biosynthesis; NAD(+) from nicotinamide D-ribonucleotide: step 1/1. Functionally, this enzyme has three activities: DNA binding, nicotinamide mononucleotide (NMN) adenylyltransferase and ribosylnicotinamide (RN) kinase. The DNA-binding domain binds to the nadB operator sequence in an NAD- and ATP-dependent manner. As NAD levels increase within the cell, the affinity of NadR for the nadB operator regions of nadA, nadB, and pncB increases, repressing the transcription of these genes. The RN kinase activity catalyzes the phosphorylation of RN to form nicotinamide ribonucleotide. The NMN adenylyltransferase activity catalyzes the transfer of the AMP moiety of ATP to nicotinamide ribonucleotide to form NAD(+). The NMN adenylyltransferase domain also functions as the NAD and ATP sensor. This chain is Trifunctional NAD biosynthesis/regulator protein NadR (nadR), found in Klebsiella pneumoniae.